A 197-amino-acid chain; its full sequence is Protein GrpE (197 aa).

A disordered region spans residues 1–40 (MSSKEQKTPEGQAPEEIIMDQHEEIEAVEPEASAEQVDPR).

It belongs to the GrpE family. Homodimer.

Its subcellular location is the cytoplasm. Participates actively in the response to hyperosmotic and heat shock by preventing the aggregation of stress-denatured proteins, in association with DnaK and GrpE. It is the nucleotide exchange factor for DnaK and may function as a thermosensor. Unfolded proteins bind initially to DnaJ; upon interaction with the DnaJ-bound protein, DnaK hydrolyzes its bound ATP, resulting in the formation of a stable complex. GrpE releases ADP from DnaK; ATP binding to DnaK triggers the release of the substrate protein, thus completing the reaction cycle. Several rounds of ATP-dependent interactions between DnaJ, DnaK and GrpE are required for fully efficient folding. This is Protein GrpE from Escherichia coli (strain K12 / DH10B).